The sequence spans 192 residues: NADH dehydrogenase [ubiquinone] iron-sulfur protein 3 (192 aa).

Belongs to the complex I 30 kDa subunit family. In terms of assembly, complex I is composed of about 45 different subunits. This is a component of the iron-sulfur (IP) fragment of the enzyme.

It is found in the mitochondrion inner membrane. It catalyses the reaction a ubiquinone + NADH + 5 H(+)(in) = a ubiquinol + NAD(+) + 4 H(+)(out). Its function is as follows. Core subunit of the mitochondrial membrane respiratory chain NADH dehydrogenase (Complex I) that is believed to belong to the minimal assembly required for catalysis. Complex I functions in the transfer of electrons from NADH to the respiratory chain. The immediate electron acceptor for the enzyme is believed to be ubiquinone. This is NADH dehydrogenase [ubiquinone] iron-sulfur protein 3 (NAD9) from Patellifolia webbiana (Patellaria webbiana).